We begin with the raw amino-acid sequence, 335 residues long: NADP(+)-dependent glycerol-3-phosphate dehydrogenase (335 aa).

Glycine 137 is a sn-glycerol 3-phosphate binding site. Position 141 (alanine 141) interacts with NADPH. 4 residues coordinate sn-glycerol 3-phosphate: lysine 192, aspartate 250, arginine 259, and asparagine 260. The active-site Proton acceptor is lysine 192. Arginine 259 contacts NADPH. The NADPH site is built by valine 287 and glutamate 289.

The protein belongs to the NAD-dependent glycerol-3-phosphate dehydrogenase family. As to quaternary structure, homodimer.

It localises to the cytoplasm. The enzyme catalyses sn-glycerol 3-phosphate + NADP(+) = dihydroxyacetone phosphate + NADPH + H(+). In terms of biological role, catalyzes the reduction of the glycolytic intermediate dihydroxyacetone phosphate (DHAP) to sn-glycerol 3-phosphate (G3P). Shows a 15-fold preference for NADPH over NADH in the reduction process. Can also catalyze the reverse reaction in vitro. Shows no activity with dihydroxyacetone, glycerol, glycerol-2-phosphate, D-glyceraldehyde-3-phosphate, DL-glyceraldehyde, D-erythrose-4-phosphate, D-fructose-6-phosphate, beta-D-glucose-6-phosphate, or alpha-D-galactose-1-phosphate. This is NADP(+)-dependent glycerol-3-phosphate dehydrogenase from Archaeoglobus fulgidus (strain ATCC 49558 / DSM 4304 / JCM 9628 / NBRC 100126 / VC-16).